We begin with the raw amino-acid sequence, 290 residues long: 4-hydroxybenzoate octaprenyltransferase (290 aa).

8 consecutive transmembrane segments (helical) span residues 23–43, 46–66, 99–119, 141–161, 163–183, 213–233, 234–254, and 268–288; these read IGAL…TPGV, LWIL…GCVV, LFVV…TMTI, LPQV…FAAV, ESVP…AVAY, LIIG…GELN, GLGW…VYQQ, and AFMN…MSYW.

It belongs to the UbiA prenyltransferase family. Mg(2+) serves as cofactor.

Its subcellular location is the cell inner membrane. It catalyses the reaction all-trans-octaprenyl diphosphate + 4-hydroxybenzoate = 4-hydroxy-3-(all-trans-octaprenyl)benzoate + diphosphate. It participates in cofactor biosynthesis; ubiquinone biosynthesis. Its function is as follows. Catalyzes the prenylation of para-hydroxybenzoate (PHB) with an all-trans polyprenyl group. Mediates the second step in the final reaction sequence of ubiquinone-8 (UQ-8) biosynthesis, which is the condensation of the polyisoprenoid side chain with PHB, generating the first membrane-bound Q intermediate 3-octaprenyl-4-hydroxybenzoate. The sequence is that of 4-hydroxybenzoate octaprenyltransferase from Escherichia coli O6:K15:H31 (strain 536 / UPEC).